The sequence spans 140 residues: Nucleoside diphosphate kinase (140 aa).

Lysine 11, phenylalanine 59, arginine 87, threonine 93, arginine 104, and asparagine 114 together coordinate ATP. Histidine 117 acts as the Pros-phosphohistidine intermediate in catalysis.

Belongs to the NDK family. In terms of assembly, homotetramer. Mg(2+) is required as a cofactor.

Its subcellular location is the cytoplasm. The catalysed reaction is a 2'-deoxyribonucleoside 5'-diphosphate + ATP = a 2'-deoxyribonucleoside 5'-triphosphate + ADP. It catalyses the reaction a ribonucleoside 5'-diphosphate + ATP = a ribonucleoside 5'-triphosphate + ADP. In terms of biological role, major role in the synthesis of nucleoside triphosphates other than ATP. The ATP gamma phosphate is transferred to the NDP beta phosphate via a ping-pong mechanism, using a phosphorylated active-site intermediate. The polypeptide is Nucleoside diphosphate kinase (Paracoccus denitrificans (strain Pd 1222)).